We begin with the raw amino-acid sequence, 194 residues long: Der GTPase-activating protein YihI (194 aa).

Positions 1-81 (MSRSKKTRRI…AKVKKDPRVG (81 aa)) are disordered. 2 stretches are compositionally biased toward basic and acidic residues: residues 9–23 (RISD…DKKP) and 36–47 (TRYELDVQAREE). Positions 59–70 (GSRNVITEQKTA) are enriched in polar residues.

This sequence belongs to the YihI family. As to quaternary structure, interacts with Der.

A GTPase-activating protein (GAP) that modifies Der/EngA GTPase function. May play a role in ribosome biogenesis. The chain is Der GTPase-activating protein YihI from Haemophilus ducreyi (strain 35000HP / ATCC 700724).